We begin with the raw amino-acid sequence, 461 residues long: High-affinity Na(+)/H(+) antiporter NhaS3 (461 aa).

11 helical membrane passes run 22–42 (TEIA…IYFA), 58–78 (VLGE…LLLF), 113–133 (SEVI…EIGL), 148–170 (AIVA…MTIF), 175–197 (IPAI…KVLA), 209–229 (IIIG…AVVG), 239–259 (ISNI…SILI), 280–300 (LLLV…IVQL), 360–380 (GLII…VTGF), 391–411 (LAIG…AGVG), and 424–444 (AIIV…RAVF).

It belongs to the monovalent cation:proton antiporter 2 (CPA2) transporter (TC 2.A.37) family.

It localises to the cellular thylakoid membrane. Its function is as follows. Na(+)/H(+) antiporter that transports sodium from the cytoplasm into the thylakoid lumen in exchange for protons. Contributes to sodium homeostasis and tolerance. Also has Li(+)/H(+) antiport activity under K(+)-free conditions, but not under K(+)-rich conditions. The chain is High-affinity Na(+)/H(+) antiporter NhaS3 (nhaS3) from Synechocystis sp. (strain ATCC 27184 / PCC 6803 / Kazusa).